Consider the following 270-residue polypeptide: Phospholysine phosphohistidine inorganic pyrophosphate phosphatase (270 aa).

Asp-17 and Ser-19 together coordinate Mg(2+). Substrate contacts are provided by residues 17 to 19, 54 to 55, and Lys-189; these read DIS and TN. Asp-214 is a Mg(2+) binding site.

It belongs to the HAD-like hydrolase superfamily. As to quaternary structure, homodimer. It depends on Mg(2+) as a cofactor.

Its subcellular location is the cytoplasm. The protein resides in the nucleus. It catalyses the reaction diphosphate + H2O = 2 phosphate + H(+). Phosphatase that hydrolyzes imidodiphosphate, 3-phosphohistidine and 6-phospholysine. Has broad substrate specificity and can also hydrolyze inorganic diphosphate, but with lower efficiency. The polypeptide is Phospholysine phosphohistidine inorganic pyrophosphate phosphatase (Lhpp) (Mus musculus (Mouse)).